We begin with the raw amino-acid sequence, 402 residues long: S-adenosylmethionine synthase (402 aa).

An ATP-binding site is contributed by His16. A Mg(2+)-binding site is contributed by Asp18. K(+) is bound at residue Glu44. The L-methionine site is built by Glu57 and Gln103. Residues 103–113 (QSPDIAQGVDT) form a flexible loop region. Residues 178 to 180 (DGK), 249 to 250 (KF), Asp258, 264 to 265 (RK), Ala281, and Lys285 contribute to the ATP site. L-methionine is bound at residue Asp258. L-methionine is bound at residue Lys289.

This sequence belongs to the AdoMet synthase family. In terms of assembly, homotetramer; dimer of dimers. Mg(2+) serves as cofactor. It depends on K(+) as a cofactor.

The protein resides in the cytoplasm. The enzyme catalyses L-methionine + ATP + H2O = S-adenosyl-L-methionine + phosphate + diphosphate. Its pathway is amino-acid biosynthesis; S-adenosyl-L-methionine biosynthesis; S-adenosyl-L-methionine from L-methionine: step 1/1. Its function is as follows. Catalyzes the formation of S-adenosylmethionine (AdoMet) from methionine and ATP. The overall synthetic reaction is composed of two sequential steps, AdoMet formation and the subsequent tripolyphosphate hydrolysis which occurs prior to release of AdoMet from the enzyme. The chain is S-adenosylmethionine synthase from Mycolicibacterium gilvum (strain PYR-GCK) (Mycobacterium gilvum (strain PYR-GCK)).